The chain runs to 597 residues: Elongation factor 4 (597 aa).

One can recognise a tr-type G domain in the interval 2-184; the sequence is KNIRNFSIIA…RLVRDIPAPE (183 aa). GTP is bound by residues 14–19 and 131–134; these read DHGKST and NKID.

This sequence belongs to the TRAFAC class translation factor GTPase superfamily. Classic translation factor GTPase family. LepA subfamily.

It localises to the cell inner membrane. It carries out the reaction GTP + H2O = GDP + phosphate + H(+). Required for accurate and efficient protein synthesis under certain stress conditions. May act as a fidelity factor of the translation reaction, by catalyzing a one-codon backward translocation of tRNAs on improperly translocated ribosomes. Back-translocation proceeds from a post-translocation (POST) complex to a pre-translocation (PRE) complex, thus giving elongation factor G a second chance to translocate the tRNAs correctly. Binds to ribosomes in a GTP-dependent manner. The chain is Elongation factor 4 from Edwardsiella ictaluri (strain 93-146).